A 188-amino-acid chain; its full sequence is Peptidyl-tRNA hydrolase (188 aa).

Tyr14 serves as a coordination point for tRNA. His19 serves as the catalytic Proton acceptor. TRNA is bound by residues Tyr64, Asn66, and Asn113.

The protein belongs to the PTH family. In terms of assembly, monomer.

The protein localises to the cytoplasm. The catalysed reaction is an N-acyl-L-alpha-aminoacyl-tRNA + H2O = an N-acyl-L-amino acid + a tRNA + H(+). In terms of biological role, hydrolyzes ribosome-free peptidyl-tRNAs (with 1 or more amino acids incorporated), which drop off the ribosome during protein synthesis, or as a result of ribosome stalling. Catalyzes the release of premature peptidyl moieties from peptidyl-tRNA molecules trapped in stalled 50S ribosomal subunits, and thus maintains levels of free tRNAs and 50S ribosomes. This chain is Peptidyl-tRNA hydrolase, found in Chloroflexus aurantiacus (strain ATCC 29364 / DSM 637 / Y-400-fl).